The primary structure comprises 493 residues: Probable cytochrome P450 6a13 (493 aa).

Residue Cys435 participates in heme binding.

The protein belongs to the cytochrome P450 family. The cofactor is heme.

Its subcellular location is the endoplasmic reticulum membrane. The protein localises to the microsome membrane. In terms of biological role, may be involved in the metabolism of insect hormones and in the breakdown of synthetic insecticides. The protein is Probable cytochrome P450 6a13 (Cyp6a13) of Drosophila melanogaster (Fruit fly).